We begin with the raw amino-acid sequence, 68 residues long: Bacteriocin lactococcin-B (68 aa).

Positions 1–21 (MKNQLNFNIVSDEELAEVNGG) are excised as a propeptide.

It is found in the secreted. Kills Lactococci by dissipating the membrane potential of the cells. The sequence is that of Bacteriocin lactococcin-B (lcnB) from Lactococcus lactis subsp. cremoris (Streptococcus cremoris).